Reading from the N-terminus, the 84-residue chain is UPF0386 protein R01313 (84 aa).

The protein belongs to the UPF0386 family.

This is UPF0386 protein R01313 from Rhizobium meliloti (strain 1021) (Ensifer meliloti).